The sequence spans 1216 residues: FK506-binding protein 15 (1216 aa).

An N-acetylmethionine modification is found at Met1. A phosphoserine mark is found at Ser14 and Ser23. Residues 41–68 (YTAPKQPKKGQGTAAGNQTAPKPAPATT) are disordered. A compositionally biased stretch (low complexity) spans 59–68 (TAPKPAPATT). Residues 71 to 168 (SSVLFATAVH…AVSFNKQVCV (98 aa)) form an important for function in growth cone organization region. Lys91 carries the N6-acetyllysine modification. The region spanning 196–289 (GDSLEVAYTG…VFEVEVRRVK (94 aa)) is the PPIase FKBP-type domain. Residues 292 to 357 (RDSGSDGHSV…QLTVNSNPDT (66 aa)) form a disordered region. Positions 303–322 (SRDSAAPSPIPASDSLSADP) are enriched in low complexity. Phosphoserine occurs at positions 306, 310, 342, 344, and 617. The segment covering 340 to 356 (SKSNSLSEQLTVNSNPD) has biased composition (polar residues). 2 coiled-coil regions span residues 519–790 (MAVN…AAAE) and 820–865 (QQYR…RLEK). A disordered region spans residues 927–1216 (HQEEEEEEEE…DDDDDIGWLG (290 aa)). The span at 929–940 (EEEEEEEEEEEE) shows a compositional bias: acidic residues. Ser948 carries the phosphoserine modification. Pro residues predominate over residues 954–964 (PATPGMPPAPP). A compositionally biased stretch (low complexity) spans 983–994 (TTPLPLQALPTP). Phosphoserine is present on Ser1018. The segment covering 1036 to 1045 (TSIPPKPPGP) has biased composition (pro residues). A phosphoserine mark is found at Ser1050 and Ser1091. Position 1093 is a phosphothreonine (Thr1093). Phosphoserine occurs at positions 1108, 1153, 1157, 1159, and 1190. A Phosphothreonine modification is found at Thr1198. Residues 1202–1216 (GDDDDDDDDDIGWLG) show a composition bias toward acidic residues.

This sequence belongs to the FKBP-type PPIase family. Interacts with WIP and actin. Interacts with TBC1D23. As to expression, expressed in brain, with highest levels in the granular cell layer of cerebellum and in the granule cell layer of dentate gyrus.

The protein localises to the cytoplasm. Its subcellular location is the cell projection. The protein resides in the axon. It localises to the early endosome. Its function is as follows. Involved in the transport of early endosomes at the level of transition between microfilament-based and microtubule-based movement. May be involved in the cytoskeletal organization of neuronal growth cones. Seems to be inactive as a PPIase. The protein is FK506-binding protein 15 (Fkbp15) of Mus musculus (Mouse).